The chain runs to 322 residues: Pantothenate kinase (322 aa).

Residue 100 to 107 (GSVAVGKS) coordinates ATP.

It belongs to the prokaryotic pantothenate kinase family.

It is found in the cytoplasm. It catalyses the reaction (R)-pantothenate + ATP = (R)-4'-phosphopantothenate + ADP + H(+). Its pathway is cofactor biosynthesis; coenzyme A biosynthesis; CoA from (R)-pantothenate: step 1/5. This chain is Pantothenate kinase, found in Agrobacterium fabrum (strain C58 / ATCC 33970) (Agrobacterium tumefaciens (strain C58)).